A 474-amino-acid chain; its full sequence is Aspartyl/glutamyl-tRNA(Asn/Gln) amidotransferase subunit B (474 aa).

Belongs to the GatB/GatE family. GatB subfamily. Heterotrimer of A, B and C subunits.

The catalysed reaction is L-glutamyl-tRNA(Gln) + L-glutamine + ATP + H2O = L-glutaminyl-tRNA(Gln) + L-glutamate + ADP + phosphate + H(+). It catalyses the reaction L-aspartyl-tRNA(Asn) + L-glutamine + ATP + H2O = L-asparaginyl-tRNA(Asn) + L-glutamate + ADP + phosphate + 2 H(+). Functionally, allows the formation of correctly charged Asn-tRNA(Asn) or Gln-tRNA(Gln) through the transamidation of misacylated Asp-tRNA(Asn) or Glu-tRNA(Gln) in organisms which lack either or both of asparaginyl-tRNA or glutaminyl-tRNA synthetases. The reaction takes place in the presence of glutamine and ATP through an activated phospho-Asp-tRNA(Asn) or phospho-Glu-tRNA(Gln). This Wolbachia pipientis wMel protein is Aspartyl/glutamyl-tRNA(Asn/Gln) amidotransferase subunit B.